Consider the following 71-residue polypeptide: Small ribosomal subunit protein bS21 (71 aa).

A compositionally biased stretch (basic residues) spans 48 to 59; that stretch reads KAAAAVKRHAKK. A disordered region spans residues 48 to 71; it reads KAAAAVKRHAKKVQRENRKFQRLY. The segment covering 60-71 has biased composition (basic and acidic residues); it reads VQRENRKFQRLY.

This sequence belongs to the bacterial ribosomal protein bS21 family.

This Saccharophagus degradans (strain 2-40 / ATCC 43961 / DSM 17024) protein is Small ribosomal subunit protein bS21.